Consider the following 132-residue polypeptide: Small ribosomal subunit protein uS12 (132 aa).

At D89 the chain carries 3-methylthioaspartic acid.

The protein belongs to the universal ribosomal protein uS12 family. Part of the 30S ribosomal subunit. Contacts proteins S8 and S17. May interact with IF1 in the 30S initiation complex.

Its function is as follows. With S4 and S5 plays an important role in translational accuracy. Interacts with and stabilizes bases of the 16S rRNA that are involved in tRNA selection in the A site and with the mRNA backbone. Located at the interface of the 30S and 50S subunits, it traverses the body of the 30S subunit contacting proteins on the other side and probably holding the rRNA structure together. The combined cluster of proteins S8, S12 and S17 appears to hold together the shoulder and platform of the 30S subunit. This is Small ribosomal subunit protein uS12 from Campylobacter curvus (strain 525.92).